A 139-amino-acid chain; its full sequence is MKKGTVLNSEISSVISHLGHTDTLVVCDAGLPIPNSTARIDMALTQGVPSFMQVVDVVTREMQVEAAILATEIKQQNPQLHETLLTHLEQLQQHQGNTIKISYTTHEQFKKLTADSQAVIRSGECSPYANVILCAGVTF.

H20 acts as the Proton donor in catalysis. Substrate-binding positions include D28, H106, and 128–130 (YAN).

This sequence belongs to the RbsD / FucU family. RbsD subfamily. Homodecamer.

It localises to the cytoplasm. The enzyme catalyses beta-D-ribopyranose = beta-D-ribofuranose. The protein operates within carbohydrate metabolism; D-ribose degradation; D-ribose 5-phosphate from beta-D-ribopyranose: step 1/2. Functionally, catalyzes the interconversion of beta-pyran and beta-furan forms of D-ribose. This chain is D-ribose pyranase, found in Salmonella paratyphi B (strain ATCC BAA-1250 / SPB7).